A 235-amino-acid polypeptide reads, in one-letter code: MDTKLSVTGAKKSQGKASGLGNEGTPIGNEESTNKAKNGNKKRNKNRNRNKKTETKEQNEPKPVTGGEEVRVEKSQAKNRRRKNNNGANKKNTLHYSKEINVEERKQIAKRQEEIEQCIHTLSDFKLFKKGKHVTSYGYRISPMTDSGKISLKILFNIPLDYPKAPIKLTMKSNEEVSSYMDTVIANFNWKARQLVKEDWRILSQINYLVSELEILKMENYKQIDKLRNSFYKTI.

A disordered region spans residues 1-98 (MDTKLSVTGA…NKKNTLHYSK (98 aa)). Residues K16 and K35 each participate in a glycyl lysine isopeptide (Lys-Gly) (interchain with G-Cter in ubiquitin) cross-link. Positions 38–50 (NGNKKRNKNRNRN) are enriched in basic residues. Residues 51–60 (KKTETKEQNE) show a composition bias toward basic and acidic residues.

This is an uncharacterized protein from Saccharomyces cerevisiae (strain ATCC 204508 / S288c) (Baker's yeast).